Reading from the N-terminus, the 604-residue chain is Microtubule-associated protein 70-4 (604 aa).

The segment at 1-33 (MEERGFMSPSLAISASYREGGSKGMSRRRSMRP) is disordered. The stretch at 49–351 (DPVRIELNRL…ADRAAKSEAQ (303 aa)) forms a coiled coil. Positions 233-470 (IIDKMHRQKV…PLNHKSSEGT (238 aa)) are required for targeting to microtubules. Disordered regions lie at residues 367 to 422 (LKGP…RSLT) and 434 to 495 (GTSR…NDSV). The span at 371-385 (TSSSSRGTSVGRSSS) shows a compositional bias: low complexity. Polar residues-rich tracts occupy residues 401 to 422 (PKIT…RSLT) and 468 to 478 (EGTSRGESPSS). The stretch at 521-569 (LRDKDEAIEMLAKKVETLTKAMDVEAKKMRREVAVMGKEVAAMRVVDKG) forms a coiled coil.

The protein belongs to the MAP70 family.

The protein localises to the cytoplasm. The protein resides in the cytoskeleton. In terms of biological role, plant-specific protein that interact with microtubules. The polypeptide is Microtubule-associated protein 70-4 (MAP70.4) (Arabidopsis thaliana (Mouse-ear cress)).